Reading from the N-terminus, the 306-residue chain is Dioxygenase FrzG (306 aa).

Positions 132, 134, and 216 each coordinate Fe cation.

Belongs to the PhyH family. In terms of assembly, homodimer. Requires Fe cation as cofactor.

The catalysed reaction is (1S,4S)-4-[(4-methoxyphenyl)methyl]-2-methyl-2,5-diazaspiro[bicyclo[3.2.1]octane-6,1'-cyclohexan]-4'-one + 2-oxoglutarate + O2 = (2S)-3-(4-methoxyphenyl)-2-[(3S)-3-(methylamino)-8-oxo-1-azaspiro[4.5]decan-1-yl]propanal + succinate + CO2. Its pathway is secondary metabolite biosynthesis. Its function is as follows. Dioxygenase; part of the gene cluster that mediates the biosynthesis of the alkaloid (-)-FR901483, a potent immunosuppressant that shows efficacy in animal models and a probable inhibitor of purine nucleotide biosynthesis by targeting phosphoribosylpyrophosphate amidotransferase (PPAT). Within the pathway, FrzG cleaves the C9-N10' bond to yield a conjugated iminium. FrzG is also able to catalyze the dehydrogenation between C7 and C8 which leads to a shunt product. The biosynthesis of (-)-FR901483 starts with the condensation of two L-tyrosines to yield (S,S)-dityrosyl-piperazine. This process occurs in 3 steps with the non-canonical nonribosomal peptide synthetase FrzA catalyzing the reduction of L-tyrosine into L-tyrosinal, the spontaneous condensation of 2 L-tyrosinal units, and the subsequent reduction by the NmrA-like family domain-containing oxidoreductase FrzB. The cytochrome P450 monooxygenase FrzC then performs coupling between N10 and C1' to morph the piperazine into a 1,4-diazabicyclo[3.2.1]octane spiro-fused to a 2,5-cyclohexadienone. The dienone portion is further reduced to cyclohexanone by the flavin-dependent reductase FrzD. The methyltranserases (MTs) FrzE and FrzF are then involved in the methylation at the C10' amine and the C4 phenolic oxygen, respectively. The order of the two MTs appear to be interchangeable. Cleavage of the C9-N10' bond by the dioxygenase FrzG then leads to formation of a conjugated iminium. In addition to the oxidation of C9, an additional dehydrogenation between C7 and C8 can occur to give a likely shunt product. The next biosynthetic step is the intramolecular aldol condensation catalyzed by the newly identified aldolase FrzH to yield an aza-tricyclic product with the formation of a C9-C3' bond. The short-chain dehydrogenase/reductase FrzI then produces dephospho-(-)-FR901483 that is phosphorylated at C4'-OH into (-)-FR901483 by the phosphotransferase FrzJ. The protein is Dioxygenase FrzG of Cladobotryum sp.